The chain runs to 155 residues: MPAVLDTPVAIRRTAMDLLARREHGRVELTRKLRQRGAPPELIEAALDRLVEEGLLSESRYLESFVSYRARSGYGPARIREELNQRGLQRADVERALKECGVNWQEKLQEVWQRKFAGELPVDARERARQGRFLSYRGYPLDMIGRLLSGRGGDD.

The protein belongs to the RecX family.

Its subcellular location is the cytoplasm. Its function is as follows. Modulates RecA activity. This is Regulatory protein RecX from Pseudomonas syringae pv. tomato (strain ATCC BAA-871 / DC3000).